The following is an 81-amino-acid chain: Acyl carrier protein (81 aa).

Positions 2–80 (ASNEEILAGL…DAVSFIANAQ (79 aa)) constitute a Carrier domain. The residue at position 40 (serine 40) is an O-(pantetheine 4'-phosphoryl)serine.

Belongs to the acyl carrier protein (ACP) family. Post-translationally, 4'-phosphopantetheine is transferred from CoA to a specific serine of apo-ACP by AcpS. This modification is essential for activity because fatty acids are bound in thioester linkage to the sulfhydryl of the prosthetic group.

It is found in the cytoplasm. Its pathway is lipid metabolism; fatty acid biosynthesis. Functionally, carrier of the growing fatty acid chain in fatty acid biosynthesis. The chain is Acyl carrier protein from Paenarthrobacter aurescens (strain TC1).